Here is a 141-residue protein sequence, read N- to C-terminus: Cystatin (141 aa).

Residues 1–26 form the signal peptide; it reads MVHSQLPVAAPLRLLCALLLLPSATM. The Cystatin domain maps to 29-129; that stretch reads GGLSPRSVTD…CHFQVWSRPW (101 aa). The Secondary area of contact motif lies at 73-77; the sequence is QVVAG. Intrachain disulfides connect C91–C107 and C120–C140.

This sequence belongs to the cystatin family. In terms of tissue distribution, expressed at a low level by the venom gland (at protein level).

The protein resides in the secreted. Functionally, inhibits various C1 cysteine proteases including cathepsin L, papain and cathepsin B. This protein has no toxic activity and its function in the venom is unknown. It may play a role as a housekeeping or regulatory protein. In Pseudonaja textilis (Eastern brown snake), this protein is Cystatin.